Consider the following 258-residue polypeptide: MLSLCLMAALLLAAGPGPSLGDEAIHCPPCSEEKLARCRPPVGCEELVREPGCGCCATCALGKGMPCGVYTPRCGSGLRCYPPRGVEKPLHTLVHGQGVCMELAEIEAIQESLQPSDKDEGDHPNNSFSPCSAHDRKCLQKHLAKIRDRSTSGGKMKVIGAPREEARPVPQGSCQSELHRALERLAASQSRTHEDLYIIPIPNCDRNGNFHPKQCHPALDGQRGKCWCVDRKTGVKLPGGLEPKGELDCHQLADSFRE.

Residues 1–21 (MLSLCLMAALLLAAGPGPSLG) form the signal peptide. The region spanning 23-103 (EAIHCPPCSE…VHGQGVCMEL (81 aa)) is the IGFBP N-terminal domain. Disulfide bonds link cysteine 27-cysteine 53, cysteine 30-cysteine 55, cysteine 38-cysteine 56, cysteine 44-cysteine 59, cysteine 67-cysteine 80, and cysteine 74-cysteine 100. Asparagine 125 carries an N-linked (GlcNAc...) asparagine glycan. Disulfide bonds link cysteine 131/cysteine 138, cysteine 174/cysteine 204, cysteine 215/cysteine 226, and cysteine 228/cysteine 249. A Thyroglobulin type-1 domain is found at 171 to 249 (QGSCQSELHR…GLEPKGELDC (79 aa)). A Phosphoserine modification is found at serine 255.

In terms of assembly, binds IGF2 more than IGF1.

The protein localises to the secreted. Functionally, IGF-binding proteins prolong the half-life of the IGFs and have been shown to either inhibit or stimulate the growth promoting effects of the IGFs on cell culture. They alter the interaction of IGFs with their cell surface receptors. The chain is Insulin-like growth factor-binding protein 4 (IGFBP4) from Bos taurus (Bovine).